A 176-amino-acid polypeptide reads, in one-letter code: Outer membrane protein assembly factor BamE (176 aa).

Residues 1–21 (MQNAKLMLTCLAFAGLAALAG) form the signal peptide. Cys22 carries N-palmitoyl cysteine lipidation. Cys22 carries S-diacylglycerol cysteine lipidation. A disordered region spans residues 121 to 176 (KEGSTTVTQPADQQKPEAQKEEPPKPGSTLEQLQREVDEAQPVPVPTPEPLDPSPQ). Positions 123 to 132 (GSTTVTQPAD) are enriched in polar residues. Residues 134-144 (QKPEAQKEEPP) show a composition bias toward basic and acidic residues. Over residues 163 to 176 (VPVPTPEPLDPSPQ) the composition is skewed to pro residues.

The protein belongs to the BamE family. Part of the Bam complex.

The protein resides in the cell outer membrane. Functionally, part of the outer membrane protein assembly complex, which is involved in assembly and insertion of beta-barrel proteins into the outer membrane. May have a structural role in maintaining the cell envelope integrity. This Pseudomonas aeruginosa (strain ATCC 15692 / DSM 22644 / CIP 104116 / JCM 14847 / LMG 12228 / 1C / PRS 101 / PAO1) protein is Outer membrane protein assembly factor BamE.